The sequence spans 1522 residues: Histone-lysine N-methyltransferase EZH2 (1522 aa).

A disordered region spans residues 1–196 (MSPARGDANA…PKTPTPKNTE (196 aa)). The segment covering 39–61 (NRENLRDRDRADKLEKLEKDAHA) has biased composition (basic and acidic residues). Composition is skewed to low complexity over residues 64–76 (QTQT…PVTV) and 103–130 (RGST…SPSL). Positions 141–162 (ILASRTSRFSNRTGIRDSQSPS) are enriched in polar residues. The span at 180-195 (ATSNTPAPKTPTPKNT) shows a compositional bias: low complexity. An SBD domain region spans residues 190-220 (PTPKNTEWTVDKIASALSVLAEEVPQNHSRL). The tract at residues 221 to 250 (VNFLLEETEKRAPQPRHLSKTDPFAHMKSK) is EBD domain. The BAM domain stretch occupies residues 251-300 (AIDANRPRPEGVPTMDVKFKQHSGEYGKSRNSGRRFQYPVVCIKPDREPV). An SAL domain region spans residues 301 to 320 (PPYRFHHAEIRKNILALNSQ). Positions 321–360 (LNFVPHLRDVDPNSAEEQKYSAWLMDLENLDSKSGFKIQP) are SRM domain. The tract at residues 361–480 (RSQKIAKRAQ…PIFDNKRAKD (120 aa)) is SANT1L domain. Residues 406–426 (PESDDSMTPQQKSNLLDTYSD) form a disordered region. The segment covering 411 to 422 (SMTPQQKSNLLD) has biased composition (polar residues). The segment at 481–560 (APGSQKPPDE…EQRQKTEGGS (80 aa)) is MCSS domain. 26 residues coordinate Zn(2+): C508, C511, C516, H518, C570, C574, C615, C625, C685, H687, C691, C697, C699, C709, C713, C715, C720, C727, C729, C736, C746, C748, C755, C760, C763, and C784. The SANT2L domain stretch occupies residues 561 to 650 (ANAPPAHPPC…PVEPRTIPKQ (90 aa)). A CXC domain is found at 658–780 (RRKKQLMSDW…PENAYDEVLH (123 aa)). The region spanning 795–919 (KAVVLGKSQL…AGEELFFNYG (125 aa)) is the SET domain. Positions 809, 852, 854, and 855 each coordinate S-adenosyl-L-homocysteine. Positions 809, 852, 854, 855, 880, 881, and 926 each coordinate S-adenosyl-L-methionine. H881 contributes to the S-adenosyl-L-homocysteine binding site. K927 is an S-adenosyl-L-homocysteine binding site. The disordered stretch occupies residues 933–1522 (NEQSGAETTP…KPARYRDEGE (590 aa)). Polar residues predominate over residues 935-946 (QSGAETTPQQPK). Over residues 971 to 988 (GFDDDDRDGNDSDPDDLW) the composition is skewed to acidic residues. Positions 992-1024 (QQQQQQQQQQQQQQQQQQQQQQQQQQQQQQQQQ) are enriched in low complexity. The segment covering 1025 to 1038 (AQKPQPSTSHQPQS) has biased composition (polar residues). Residues 1053–1066 (SPDKQLRRENHDAQ) are compositionally biased toward basic and acidic residues. The span at 1072–1091 (QFQQQEQQQQQQQQQQQQQQ) shows a compositional bias: low complexity. A compositionally biased stretch (polar residues) spans 1127 to 1136 (DSSSGGSANE). The segment covering 1142 to 1162 (KPSRRGGARPGAGRKPKHRPP) has biased composition (basic residues). Composition is skewed to basic and acidic residues over residues 1207–1221 (SDSK…TDKE) and 1228–1238 (VNEKDREKGRD). The segment covering 1255–1299 (KSAPSPAKKQASSPTKISDSNRTTSKNTSSNNNNNTNNNNNNNNN) has biased composition (low complexity). Positions 1316–1330 (HLTNSQPAALSPSAT) are enriched in polar residues. 2 stretches are compositionally biased toward low complexity: residues 1355–1385 (STMT…SSSS) and 1415–1428 (SSSL…SVFS). Residues 1455-1464 (SGLNSTSLSQ) show a composition bias toward polar residues. Basic and acidic residues predominate over residues 1465-1494 (ERGEKHEKHEKEKPKEKKGEKERERERDRS).

It belongs to the class V-like SAM-binding methyltransferase superfamily. Histone-lysine methyltransferase family. EZ subfamily. In terms of assembly, component of the polycomb repressive complex 2 (PRC2) that consists of four core subunits icluding EZH2, EED, SUZ12, and RBBP4, among which EZH2 is the catalytic subunit and which minimally requires EED and SUZ12 for catalysis.

It is found in the nucleus. It carries out the reaction L-lysyl(27)-[histone H3] + 3 S-adenosyl-L-methionine = N(6),N(6),N(6)-trimethyl-L-lysyl(27)-[histone H3] + 3 S-adenosyl-L-homocysteine + 3 H(+). The end product of PRC2 catalysis, H3K27me3, interacts with EED to stimulate the enzymatic activity of PRC2 allosterically. The enzymatic activity of PRC2 is regulated in a very complex manner and PCR2 can adopt different stages including the autoinhibited (A); SAM-bound autoinhibited (A'), basal (B), and H3K27me3-stimulated (S) stages. Actictivity is inhibited by pyridone inhibitors such as GSK126. Its function is as follows. Catalytic subunit of the of the Polycomb Repressive Complex 2 (PRC2), a histone H3 lysine methyltransferase responsible for generating mono-, di-, and tri-methylation on Lys27 (H3K27me1, H3K27me2 and H3K27me3). The tri-methylated form is known to be critical in gene repression, and its proper placement is essential in defining repression patterns during development. The PRC2 complex interacts with thousands of RNA species in vivo, but the physiological function of RNA binding has still to be determined. The protein is Histone-lysine N-methyltransferase EZH2 of Chaetomium thermophilum (strain DSM 1495 / CBS 144.50 / IMI 039719) (Thermochaetoides thermophila).